The chain runs to 197 residues: Phosphoheptose isomerase (197 aa).

One can recognise an SIS domain in the interval 41-197 (VVETFRRGGK…EIVERTLFEE (157 aa)). 56–58 (NGG) provides a ligand contact to substrate. Zn(2+) contacts are provided by His-65 and Glu-69. Residues Glu-69, 98–99 (ND), 124–126 (STS), Ser-129, and Gln-176 each bind substrate. Residues Gln-176 and His-184 each coordinate Zn(2+).

This sequence belongs to the SIS family. GmhA subfamily. It depends on Zn(2+) as a cofactor.

The protein localises to the cytoplasm. It catalyses the reaction 2 D-sedoheptulose 7-phosphate = D-glycero-alpha-D-manno-heptose 7-phosphate + D-glycero-beta-D-manno-heptose 7-phosphate. The protein operates within carbohydrate biosynthesis; D-glycero-D-manno-heptose 7-phosphate biosynthesis; D-glycero-alpha-D-manno-heptose 7-phosphate and D-glycero-beta-D-manno-heptose 7-phosphate from sedoheptulose 7-phosphate: step 1/1. In terms of biological role, catalyzes the isomerization of sedoheptulose 7-phosphate in D-glycero-D-manno-heptose 7-phosphate. This chain is Phosphoheptose isomerase, found in Roseiflexus sp. (strain RS-1).